The primary structure comprises 171 residues: tRNA-specific adenosine deaminase (171 aa).

The region spanning 6–133 (EEQTYFMQEA…ERLNHRVQVE (128 aa)) is the CMP/dCMP-type deaminase domain. Position 57 (His57) interacts with Zn(2+). Glu59 acts as the Proton donor in catalysis. Residues Cys87 and Cys90 each contribute to the Zn(2+) site.

It belongs to the cytidine and deoxycytidylate deaminase family. As to quaternary structure, homodimer. Requires Zn(2+) as cofactor.

It catalyses the reaction adenosine(34) in tRNA + H2O + H(+) = inosine(34) in tRNA + NH4(+). Its function is as follows. Catalyzes the deamination of adenosine to inosine at the wobble position 34 of tRNA(Arg2). The chain is tRNA-specific adenosine deaminase from Streptococcus pyogenes serotype M1.